We begin with the raw amino-acid sequence, 105 residues long: Small ribosomal subunit protein eS24 (105 aa).

The protein belongs to the eukaryotic ribosomal protein eS24 family.

The chain is Small ribosomal subunit protein eS24 from Ignicoccus hospitalis (strain KIN4/I / DSM 18386 / JCM 14125).